A 168-amino-acid chain; its full sequence is MIMIKIGQGIDVHAFHNNGQQQQYVVLAGVPIEHTHSLLAHSDGDVVLHALADALLGALALGDIGQHFPDTDAANAGLDSRVLLRYVYGKVLAAGYMLGNADITVMCERPKLAVHNLAMRANIASDLQTDVSNISVKATTTEKLGFTGRQEGIMANAVVLLVPNTSGV.

Residues D11 and H13 each coordinate a divalent metal cation. 4-CDP-2-C-methyl-D-erythritol 2-phosphate contacts are provided by residues D11 to H13 and H41 to S42. A divalent metal cation is bound at residue H49. 4-CDP-2-C-methyl-D-erythritol 2-phosphate is bound by residues D63 to G65, F68 to D72, T139 to E142, F146, and R149.

Belongs to the IspF family. In terms of assembly, homotrimer. A divalent metal cation is required as a cofactor.

It carries out the reaction 4-CDP-2-C-methyl-D-erythritol 2-phosphate = 2-C-methyl-D-erythritol 2,4-cyclic diphosphate + CMP. It participates in isoprenoid biosynthesis; isopentenyl diphosphate biosynthesis via DXP pathway; isopentenyl diphosphate from 1-deoxy-D-xylulose 5-phosphate: step 4/6. Involved in the biosynthesis of isopentenyl diphosphate (IPP) and dimethylallyl diphosphate (DMAPP), two major building blocks of isoprenoid compounds. Catalyzes the conversion of 4-diphosphocytidyl-2-C-methyl-D-erythritol 2-phosphate (CDP-ME2P) to 2-C-methyl-D-erythritol 2,4-cyclodiphosphate (ME-CPP) with a corresponding release of cytidine 5-monophosphate (CMP). The protein is 2-C-methyl-D-erythritol 2,4-cyclodiphosphate synthase of Psychrobacter arcticus (strain DSM 17307 / VKM B-2377 / 273-4).